A 272-amino-acid polypeptide reads, in one-letter code: Shikimate dehydrogenase (NADP(+)) (272 aa).

Shikimate-binding positions include S14 to S16 and T61. The active-site Proton acceptor is the K65. E77 lines the NADP(+) pocket. 2 residues coordinate shikimate: N86 and D102. NADP(+) is bound by residues G126–A130, N149–R154, and M213. Y215 provides a ligand contact to shikimate. G237 serves as a coordination point for NADP(+).

Belongs to the shikimate dehydrogenase family. Homodimer.

The catalysed reaction is shikimate + NADP(+) = 3-dehydroshikimate + NADPH + H(+). The protein operates within metabolic intermediate biosynthesis; chorismate biosynthesis; chorismate from D-erythrose 4-phosphate and phosphoenolpyruvate: step 4/7. In terms of biological role, involved in the biosynthesis of the chorismate, which leads to the biosynthesis of aromatic amino acids. Catalyzes the reversible NADPH linked reduction of 3-dehydroshikimate (DHSA) to yield shikimate (SA). This Escherichia coli O81 (strain ED1a) protein is Shikimate dehydrogenase (NADP(+)).